Here is a 275-residue protein sequence, read N- to C-terminus: MAIHLYKTSTPSTRNGTVDSRQVKSNPRNHLIYGQHRCGKGRNARGIITAGHRGGGHKRLYRQIDFRRNEKNIYGRIVTIEYDPNRNASICLIHYGDGEKKYILHPRGAIIGDTIVSGTEVPIKMGNALPLTDMPLGTAIHNIEITLGKGGQLARAAGAVAKLIAKEGKSATLKLPSGEVRLISKNCSATVGQVGNVGVNQKNLGRAGSKCWLGKRPIVRGVVMNPVDHPHGGGEGRAPIGRKKPATPWGFPALGRRSRKRKKYSDNLILRRRTK.

2 disordered regions span residues 1 to 26 and 224 to 275; these read MAIH…VKSN and MNPV…RRTK. Positions 7–26 are enriched in polar residues; that stretch reads KTSTPSTRNGTVDSRQVKSN.

Belongs to the universal ribosomal protein uL2 family. In terms of assembly, part of the 50S ribosomal subunit.

Its subcellular location is the plastid. The protein resides in the chloroplast. This Phaseolus angularis (Azuki bean) protein is Large ribosomal subunit protein uL2cz/uL2cy (rpl2-A).